The chain runs to 394 residues: Phosphoglycerate kinase (394 aa).

Residues 21 to 23 (DFN), arginine 36, 59 to 62 (HLGR), arginine 118, and arginine 151 contribute to the substrate site. At serine 183 the chain carries Phosphoserine. The ATP site is built by lysine 201 and glycine 292. Threonine 299 carries the post-translational modification Phosphothreonine. ATP contacts are provided by residues glutamate 323 and 350–353 (GGDS).

The protein belongs to the phosphoglycerate kinase family. Monomer.

It is found in the cytoplasm. The enzyme catalyses (2R)-3-phosphoglycerate + ATP = (2R)-3-phospho-glyceroyl phosphate + ADP. Its pathway is carbohydrate degradation; glycolysis; pyruvate from D-glyceraldehyde 3-phosphate: step 2/5. This Bacillus cereus (strain ATCC 10987 / NRS 248) protein is Phosphoglycerate kinase.